The following is a 341-amino-acid chain: tRNA N6-adenosine threonylcarbamoyltransferase (341 aa).

Fe cation contacts are provided by His115 and His119. Residues 137–141 (IVSGG), Asp170, Gly183, Asp187, and Asn276 each bind substrate. Asp304 lines the Fe cation pocket.

The protein belongs to the KAE1 / TsaD family. Requires Fe(2+) as cofactor.

It is found in the cytoplasm. It catalyses the reaction L-threonylcarbamoyladenylate + adenosine(37) in tRNA = N(6)-L-threonylcarbamoyladenosine(37) in tRNA + AMP + H(+). Required for the formation of a threonylcarbamoyl group on adenosine at position 37 (t(6)A37) in tRNAs that read codons beginning with adenine. Is involved in the transfer of the threonylcarbamoyl moiety of threonylcarbamoyl-AMP (TC-AMP) to the N6 group of A37, together with TsaE and TsaB. TsaD likely plays a direct catalytic role in this reaction. The polypeptide is tRNA N6-adenosine threonylcarbamoyltransferase (Staphylococcus aureus (strain USA300)).